We begin with the raw amino-acid sequence, 442 residues long: MRLSRFFMPILKENPKEAEIVSHRLMLRTGMIRQQSAGIYTWLPLGKRVLDKVNAVIREEQNRSGAIELLMPTLQSAELWQESGRYDAYGKEMLRIKDRQDRPMLYGPTNEEMITDIFRSYVKSYRNLPLNLYHIQLKFRDEIRPRFGTMRSREFLMKDAYSFDLDRAGAEHAYKRMFAAYLRTFDRLGLRAIPMRADTGPIGGNLSHEFIILADTGESEVFCHKDFLGFDIPGEDTNFDDVASMNAIFEKWTSRYAATSEMHEEAAFDAIPEGERLSARGIEVGHIFYFGTKYSEAMGAKVLGPDGKEHTVHMGSYGIGPTRLVPAIIEASHDDNGIIWPKGIAPFDIVVINMKTGDDACDTACGRLYSDLGKAGFDVLLDDTDERAGGKFATADIIGVPVQVIVGPRSIANGEVEVKDRKTGARETMTVEAAINKLVAAR.

This sequence belongs to the class-II aminoacyl-tRNA synthetase family. ProS type 2 subfamily. In terms of assembly, homodimer.

Its subcellular location is the cytoplasm. It carries out the reaction tRNA(Pro) + L-proline + ATP = L-prolyl-tRNA(Pro) + AMP + diphosphate. Its function is as follows. Catalyzes the attachment of proline to tRNA(Pro) in a two-step reaction: proline is first activated by ATP to form Pro-AMP and then transferred to the acceptor end of tRNA(Pro). The chain is Proline--tRNA ligase from Sinorhizobium medicae (strain WSM419) (Ensifer medicae).